A 356-amino-acid chain; its full sequence is Histidinol-phosphate aminotransferase (356 aa).

Lys214 bears the N6-(pyridoxal phosphate)lysine mark.

It belongs to the class-II pyridoxal-phosphate-dependent aminotransferase family. Histidinol-phosphate aminotransferase subfamily. Homodimer. Requires pyridoxal 5'-phosphate as cofactor.

The enzyme catalyses L-histidinol phosphate + 2-oxoglutarate = 3-(imidazol-4-yl)-2-oxopropyl phosphate + L-glutamate. It functions in the pathway amino-acid biosynthesis; L-histidine biosynthesis; L-histidine from 5-phospho-alpha-D-ribose 1-diphosphate: step 7/9. This is Histidinol-phosphate aminotransferase from Escherichia coli O127:H6 (strain E2348/69 / EPEC).